The following is a 222-amino-acid chain: Nudix hydrolase 11 (222 aa).

Residues 31–175 (AKSSAVLVCL…EGERYLLQYF (145 aa)) enclose the Nudix hydrolase domain. Residues 73 to 96 (GGKRDQEDKDDIATALREAREEIG) carry the Nudix box motif. The Mg(2+) site is built by E90 and E94. Residues 186 to 204 (FIIWALTAGILIRVASIVY) traverse the membrane as a helical segment.

The protein belongs to the Nudix hydrolase family. PCD1 subfamily. Mn(2+) is required as a cofactor. It depends on Mg(2+) as a cofactor. In terms of tissue distribution, expressed in roots, stems and leaves.

It is found in the peroxisome membrane. Coenzyme A diphosphatase which mediates the cleavage of CoA into 3',5'-ADP from CoA and 4'-phosphopantetheine. Can use malonyl-CoA, hexanoyl-CoA, lauroyl-CoA, myristoyl-CoA and palmitoyl-CoA as substrates, but not isobutyryl-CoA or propionyl-CoA. The chain is Nudix hydrolase 11 (NUDT11) from Arabidopsis thaliana (Mouse-ear cress).